The sequence spans 123 residues: Small ribosomal subunit protein uS12cz/uS12cy/uS12cx/uS12w (123 aa).

Residues 1–13 (MPTSNQLLRNSRQ) show a composition bias toward polar residues. A disordered region spans residues 1–30 (MPTSNQLLRNSRQPVRKTKKTPALRGCPQR). Residues 14 to 30 (PVRKTKKTPALRGCPQR) show a composition bias toward basic residues.

Belongs to the universal ribosomal protein uS12 family. Part of the 30S ribosomal subunit.

Its subcellular location is the plastid. It localises to the chloroplast. With S4 and S5 plays an important role in translational accuracy. Located at the interface of the 30S and 50S subunits. The sequence is that of Small ribosomal subunit protein uS12cz/uS12cy/uS12cx/uS12w (rps12-A) from Pelargonium hortorum (Common geranium).